Reading from the N-terminus, the 394-residue chain is Keratin, type I cuticular Ha4 (394 aa).

The segment at 1 to 56 (MSYSCCLPSLGCRTSCSSRPCVPPSCHGYTLPGACNIPANVSNCNWFCEGSFNGSE) is head. One can recognise an IF rod domain in the interval 56–367 (EKETMQFLND…SLLESEDCKL (312 aa)). Residues 57–91 (KETMQFLNDRLASYLEKVRQLERDNAELEKLIQER) form a coil 1A region. The linker 1 stretch occupies residues 92–102 (SQQQEPLLCPS). Residues 103–203 (YQSYFKTIEE…HEEEVNTLRS (101 aa)) are coil 1B. The interval 204 to 219 (QLGDRLNVEVDTAPTV) is linker 12. The interval 220–363 (DLNQVLNETR…NTYRSLLESE (144 aa)) is coil 2. The interval 364–394 (DCKLPCNPCATTNASGNSCGPCGTSQKGCCN) is tail.

Belongs to the intermediate filament family. In terms of tissue distribution, expressed in the hair follicles.

The chain is Keratin, type I cuticular Ha4 (KRT34) from Homo sapiens (Human).